The sequence spans 398 residues: tRNA-specific 2-thiouridylase MnmA (398 aa).

ATP-binding positions include 19-26 and Leu-45; that span reads AMSGGVDS. The active-site Nucleophile is the Cys-113. Cysteines 113 and 210 form a disulfide. Gly-137 lines the ATP pocket. Residues 160–162 form an interaction with tRNA region; the sequence is RDQ. Cys-210 functions as the Cysteine persulfide intermediate in the catalytic mechanism.

It belongs to the MnmA/TRMU family.

It is found in the cytoplasm. It carries out the reaction S-sulfanyl-L-cysteinyl-[protein] + uridine(34) in tRNA + AH2 + ATP = 2-thiouridine(34) in tRNA + L-cysteinyl-[protein] + A + AMP + diphosphate + H(+). In terms of biological role, catalyzes the 2-thiolation of uridine at the wobble position (U34) of tRNA, leading to the formation of s(2)U34. The protein is tRNA-specific 2-thiouridylase MnmA of Rhodopseudomonas palustris (strain HaA2).